The sequence spans 307 residues: MELSQYHQILSLLNNFSNKDKISVIECLDSISELRKQMSVLFNKLLKVALKNRNLPMVKFVCDNLEKIDNKAITLAAKYNCLEILKYLHEKGLDTTNHNYSALSWAARNNDFKMVEYLQHQGSDIRANDDEALRWAALSGCLEMVEYLQTQGCDVRNRNDFAIKYAARNGHFKLVRYLHSQGSDIRTDDDYALRWAARNGHLEIVKYLHSKGCNIHAYGDSAIKWASMGGYLEIVEYLHGVGCDIRIDNDYPIRWAASNGHLEVVEYLFSQGCDIGADNNYALMWAKKNGHDDVVEYIVLLKLLKLY.

9 ANK repeats span residues 41-67, 68-97, 98-127, 129-157, 158-187, 188-217, 219-247, 248-277, and 279-307; these read LFNKLLKVALKNRNLPMVKFVCDNLEK, IDNKAITLAAKYNCLEILKYLHEKGLDTTN, HNYSALSWAARNNDFKMVEYLQHQGSDIRA, DDEALRWAALSGCLEMVEYLQTQGCDVRN, RNDFAIKYAARNGHFKLVRYLHSQGSDIRT, DDDYALRWAARNGHLEIVKYLHSKGCNIHA, GDSAIKWASMGGYLEIVEYLHGVGCDIRI, DNDYPIRWAASNGHLEVVEYLFSQGCDIGA, and NNYALMWAKKNGHDDVVEYIVLLKLLKLY.

The polypeptide is Putative ankyrin repeat protein L59 (Acanthamoeba polyphaga (Amoeba)).